We begin with the raw amino-acid sequence, 105 residues long: Large ribosomal subunit protein uL23 (105 aa).

It belongs to the universal ribosomal protein uL23 family. Part of the 50S ribosomal subunit. Contacts protein L29, and trigger factor when it is bound to the ribosome.

In terms of biological role, one of the early assembly proteins it binds 23S rRNA. One of the proteins that surrounds the polypeptide exit tunnel on the outside of the ribosome. Forms the main docking site for trigger factor binding to the ribosome. This chain is Large ribosomal subunit protein uL23, found in Ureaplasma parvum serovar 3 (strain ATCC 27815 / 27 / NCTC 11736).